A 96-amino-acid polypeptide reads, in one-letter code: UPF0213 protein BCE_0033 (96 aa).

A GIY-YIG domain is found at 4 to 79 (NKHCFYVVEC…KQLNRKQKEE (76 aa)).

This sequence belongs to the UPF0213 family.

This chain is UPF0213 protein BCE_0033, found in Bacillus cereus (strain ATCC 10987 / NRS 248).